We begin with the raw amino-acid sequence, 188 residues long: FMN-dependent NADPH-azoreductase (188 aa).

This sequence belongs to the azoreductase type 2 family. As to quaternary structure, homotetramer. FMN is required as a cofactor.

Catalyzes the reductive cleavage of azo bond in aromatic azo compounds to the corresponding amines. Requires NADPH, but not NADH, as an electron donor for its activity. The protein is FMN-dependent NADPH-azoreductase (azo1) of Staphylococcus aureus (strain MSSA476).